The sequence spans 339 residues: 7,8-didemethyl-8-hydroxy-5-deazariboflavin synthase (339 aa).

Residues 13 to 258 enclose the Radical SAM core domain; that stretch reads ITYSKNIFIP…RDTDVSIQVP (246 aa). Residues C27, C31, and C34 each contribute to the [4Fe-4S] cluster site.

Belongs to the radical SAM superfamily. CofG family. In terms of assembly, consists of two subunits, CofG and CofH. [4Fe-4S] cluster serves as cofactor.

The enzyme catalyses 5-amino-5-(4-hydroxybenzyl)-6-(D-ribitylimino)-5,6-dihydrouracil + S-adenosyl-L-methionine = 7,8-didemethyl-8-hydroxy-5-deazariboflavin + 5'-deoxyadenosine + L-methionine + NH4(+) + H(+). Its pathway is cofactor biosynthesis; coenzyme F0 biosynthesis. Functionally, catalyzes the radical-mediated synthesis of 7,8-didemethyl-8-hydroxy-5-deazariboflavin from 5-amino-5-(4-hydroxybenzyl)-6-(D-ribitylimino)-5,6-dihydrouracil. This chain is 7,8-didemethyl-8-hydroxy-5-deazariboflavin synthase, found in Methanobrevibacter smithii (strain ATCC 35061 / DSM 861 / OCM 144 / PS).